The chain runs to 293 residues: Decaprenyl diphosphate synthase (293 aa).

The interval 1–24 (MATTRGKKTYPQLPPAPDDYPTFP) is disordered. Asp-73 is a catalytic residue. Position 73 (Asp-73) interacts with Mg(2+). Substrate-binding positions include 74-77 (GNGR), Trp-78, Arg-86, His-90, and 118-120 (STE). Asn-121 acts as the Proton acceptor in catalysis. Substrate is bound by residues Trp-122, Arg-124, Arg-241, and 247-249 (RAS). Glu-260 is a Mg(2+) binding site.

The protein belongs to the UPP synthase family. In terms of assembly, homodimer. It depends on Mg(2+) as a cofactor.

The protein resides in the cell membrane. The catalysed reaction is (2Z,6E)-farnesyl diphosphate + 7 isopentenyl diphosphate = (2Z,6Z,10Z,14Z,18Z,22Z,26Z,30Z,34E)-decaprenyl diphosphate + 7 diphosphate. The enzyme catalyses n isopentenyl diphosphate + (2E,6E)-farnesyl diphosphate = a di-trans,poly-cis-polyprenyl diphosphate + n diphosphate. Its function is as follows. Catalyzes the sequential condensation of isopentenyl diphosphate (IPP) in the cis configuration with (2Z,6E)-farnesyl diphosphate (Z-FPP or EZ-FPP) generating the 50 carbon product trans,polycis-decaprenyl diphosphate. When (2E,6E)-farnesyl diphosphate (E-FPP or EE-FPP) is used in vitro, both primary products decaprenyl diphosphate and heptaprenyl diphosphate are synthesized. It is probably due to the fact that M.smegmatis synthesizes both (2E,6E,10E)-geranylgeranyl diphosphate (EEE-GGPP) and (2E,6E,10Z)-geranylgeranyl diphosphate (EEZ-GGPP). Can also accept many different allylic substrates, including E-geranyl diphosphate (E-GPP), neryl diphosphate (NPP), and all-trans-geranyl-geranyl diphosphate. The protein is Decaprenyl diphosphate synthase (uppS) of Mycolicibacterium smegmatis (strain ATCC 700084 / mc(2)155) (Mycobacterium smegmatis).